We begin with the raw amino-acid sequence, 173 residues long: C-phycocyanin-3 beta subunit (173 aa).

The residue at position 73 (asparagine 73) is an N4-methylasparagine. Residues cysteine 83 and cysteine 154 each contribute to the (2R,3E)-phycocyanobilin site.

The protein belongs to the phycobiliprotein family. In terms of assembly, heterodimer of an alpha and a beta subunit, which further assembles into trimers and the trimers into hexamers. In terms of processing, contains two covalently linked bilin chromophores.

The protein localises to the cellular thylakoid membrane. Functionally, light-harvesting photosynthetic bile pigment-protein from the phycobiliprotein complex (phycobilisome, PBS). Phycocyanin is the major phycobiliprotein in the PBS rod. The chain is C-phycocyanin-3 beta subunit (cpcB3) from Microchaete diplosiphon (Fremyella diplosiphon).